The chain runs to 243 residues: 23S rRNA (guanosine-2'-O-)-methyltransferase RlmB (243 aa).

S-adenosyl-L-methionine-binding residues include G196, I216, and L225.

This sequence belongs to the class IV-like SAM-binding methyltransferase superfamily. RNA methyltransferase TrmH family. RlmB subfamily. Homodimer.

The protein localises to the cytoplasm. It carries out the reaction guanosine(2251) in 23S rRNA + S-adenosyl-L-methionine = 2'-O-methylguanosine(2251) in 23S rRNA + S-adenosyl-L-homocysteine + H(+). Functionally, specifically methylates the ribose of guanosine 2251 in 23S rRNA. The sequence is that of 23S rRNA (guanosine-2'-O-)-methyltransferase RlmB from Shigella flexneri.